The primary structure comprises 333 residues: Photosystem II assembly protein Ycf48 (333 aa).

The N-terminal stretch at 1–25 is a signal peptide; sequence MRVKMFKPLRLVLLIAVSVLLMAAR.

The protein belongs to the Ycf48 family. Part of early PSII assembly complexes which includes D1 (psbA) and PsbI; not found in mature PSII. Binds to the lumenal side of PSII complexes. Interacts with YidC.

It localises to the cellular thylakoid lumen. In terms of biological role, a factor required for optimal assembly of photosystem II (PSII), acting in the early stages of PSII assembly. Also plays a role in replacement of photodamaged D1 (psbA). Assists YidC in synthesis of chlorophyll-binding proteins. This chain is Photosystem II assembly protein Ycf48, found in Synechococcus sp. (strain JA-2-3B'a(2-13)) (Cyanobacteria bacterium Yellowstone B-Prime).